Consider the following 251-residue polypeptide: Probable transcriptional regulatory protein Swol_1435 (251 aa).

The segment at 1–23 is disordered; it reads MAGHSKWANIKHKKARSDEKRGK.

Belongs to the TACO1 family.

Its subcellular location is the cytoplasm. The polypeptide is Probable transcriptional regulatory protein Swol_1435 (Syntrophomonas wolfei subsp. wolfei (strain DSM 2245B / Goettingen)).